A 345-amino-acid chain; its full sequence is Methylthioribose-1-phosphate isomerase (345 aa).

Substrate contacts are provided by residues 44–46, R86, and Q194; that span reads RGA. D235 acts as the Proton donor in catalysis. Substrate is bound at residue 245–246; it reads NK.

It belongs to the eIF-2B alpha/beta/delta subunits family. MtnA subfamily.

It catalyses the reaction 5-(methylsulfanyl)-alpha-D-ribose 1-phosphate = 5-(methylsulfanyl)-D-ribulose 1-phosphate. The protein operates within amino-acid biosynthesis; L-methionine biosynthesis via salvage pathway; L-methionine from S-methyl-5-thio-alpha-D-ribose 1-phosphate: step 1/6. In terms of biological role, catalyzes the interconversion of methylthioribose-1-phosphate (MTR-1-P) into methylthioribulose-1-phosphate (MTRu-1-P). In Desulfitobacterium hafniense (strain DSM 10664 / DCB-2), this protein is Methylthioribose-1-phosphate isomerase.